The sequence spans 595 residues: Adenine deaminase 3 (595 aa).

It belongs to the metallo-dependent hydrolases superfamily. Adenine deaminase family. Requires Mn(2+) as cofactor.

It carries out the reaction adenine + H2O + H(+) = hypoxanthine + NH4(+). The chain is Adenine deaminase 3 from Rhizobium meliloti (strain 1021) (Ensifer meliloti).